The following is a 186-amino-acid chain: Large ribosomal subunit protein uL6 (186 aa).

It belongs to the universal ribosomal protein uL6 family. In terms of assembly, part of the 50S ribosomal subunit.

This protein binds to the 23S rRNA, and is important in its secondary structure. It is located near the subunit interface in the base of the L7/L12 stalk, and near the tRNA binding site of the peptidyltransferase center. This is Large ribosomal subunit protein uL6 from Sulfurisphaera tokodaii (strain DSM 16993 / JCM 10545 / NBRC 100140 / 7) (Sulfolobus tokodaii).